We begin with the raw amino-acid sequence, 299 residues long: Biphenyl-2,3-diol 1,2-dioxygenase (299 aa).

VOC domains lie at 6 to 121 (ELGY…IFYG) and 146 to 267 (GIGH…FGWG). Fe cation is bound by residues histidine 149, histidine 212, and glutamate 263.

This sequence belongs to the extradiol ring-cleavage dioxygenase family. In terms of assembly, homooctamer. Fe(2+) is required as a cofactor.

It carries out the reaction biphenyl-2,3-diol + O2 = 2-hydroxy-6-oxo-6-phenylhexa-2,4-dienoate + H(+). The protein operates within xenobiotic degradation; biphenyl degradation; 2-hydroxy-2,4-pentadienoate and benzoate from biphenyl: step 3/4. This Sphingomonas paucimobilis (Pseudomonas paucimobilis) protein is Biphenyl-2,3-diol 1,2-dioxygenase (bphC).